The primary structure comprises 839 residues: Autophagy-related protein 9A (839 aa).

A disordered region spans residues 1 to 20 (MAQFDTEYQRLEASYSDSPP). At Ala2 the chain carries N-acetylalanine. Residues 2–61 (AQFDTEYQRLEASYSDSPPGEEDLLVHVAEGSKSPWHHIENLDLFFSRVYNLHQKNGFTC) are Cytoplasmic-facing. The Tyrosine-based sorting signal motif lies at 8-11 (YQRL). Residues Ser14, Ser16, and Ser18 each carry the phosphoserine modification. Residues 62–84 (MLIGEIFELMQFLFVVAFTTFLV) traverse the membrane as a helical segment. The Lumenal segment spans residues 85–128 (SCVDYDILFANKMVNHSLHPTEPVKVTLPDAFLPAQVCSARIQE). The N-linked (GlcNAc...) asparagine glycan is linked to Asn99. A helical membrane pass occupies residues 129 to 154 (NGSLITILVIAGVFWIHRLIKFIYNI). Over 155-290 (CCYWEIHSFY…ELAQRLSNRI (136 aa)) the chain is Cytoplasmic. Residues 291-301 (LWIGIANFLLC) lie within the membrane without spanning it. Residues 302-319 (PLILIWQILYAFFSYAEV) are Cytoplasmic-facing. An intramembrane segment occupies 320 to 328 (LKREPGALG). Residues 329-371 (ARCWSLYGRCYLRHFNELEHELQSRLNRGYKPASKYMNCFLSP) lie on the Cytoplasmic side of the membrane. A helical membrane pass occupies residues 372 to 397 (LLTLLAKNGAFFAGSILAVLIALTIY). The Lumenal portion of the chain corresponds to 398 to 406 (DEDVLAVEH). Residues 407-424 (VLTTVTLLGVTVTVCRSF) form a helical membrane-spanning segment. Residues 425 to 470 (IPDQHMVFCPEQLLRVILAHIHYMPDHWQGNAHRSQTRDEFAQLFQ) are Cytoplasmic-facing. The stretch at 471–480 (YKAVFILEEL) is an intramembrane region. Topologically, residues 481–483 (LSP) are cytoplasmic. The stretch at 484-492 (IVTPLILIF) is an intramembrane region. Residues 493 to 839 (CLRPRALEII…DELPPQVHKV (347 aa)) are Cytoplasmic-facing. Phosphoserine is present on residues Ser656, Ser735, Ser738, Ser741, and Ser828. Disordered stretches follow at residues 656–686 (SPLQPGQAPTGRAHSTMTGSGVDARTASSGS) and 717–839 (HKQQ…VHKV). Residues 724 to 736 (EPERHVWHRRESD) show a composition bias toward basic and acidic residues. Acidic residues-rich tracts occupy residues 737–747 (ESGESAPDEGG) and 823–832 (VPEEGSEDEL).

Belongs to the ATG9 family. In terms of assembly, homotrimer; forms a homotrimer with a central pore that forms a path between the two membrane leaflets. Interacts (via cytoplasmic its C-terminus) with ATG2A. Interacts with SUPT20H. Interacts (via the tyrosine-based sorting signal motif) with AP4M1; promoting association with the AP-4 complex. Interacts with ARFIP1 and ARFIP2. Interacts with PI4K2A and PI4KB. Interacts with ATG4A; the interaction is direct and promotes ATG9A trafficking. Ufmylated in a DDRGK1 dependent manner.

Its subcellular location is the preautophagosomal structure membrane. The protein localises to the cytoplasmic vesicle. The protein resides in the autophagosome membrane. It localises to the golgi apparatus. It is found in the trans-Golgi network membrane. Its subcellular location is the late endosome membrane. The protein localises to the recycling endosome membrane. The protein resides in the endoplasmic reticulum membrane. It localises to the mitochondrion membrane. It carries out the reaction a 1,2-diacyl-sn-glycero-3-phosphocholine(in) = a 1,2-diacyl-sn-glycero-3-phosphocholine(out). The enzyme catalyses a 1,2-diacyl-sn-glycero-3-phospho-L-serine(in) = a 1,2-diacyl-sn-glycero-3-phospho-L-serine(out). It catalyses the reaction a 1,2-diacyl-sn-glycero-3-phosphoethanolamine(in) = a 1,2-diacyl-sn-glycero-3-phosphoethanolamine(out). Phospholipid scramblase involved in autophagy by mediating autophagosomal membrane expansion. Cycles between the preautophagosomal structure/phagophore assembly site (PAS) and the cytoplasmic vesicle pool and supplies membrane for the growing autophagosome. Lipid scramblase activity plays a key role in preautophagosomal structure/phagophore assembly by distributing the phospholipids that arrive through ATG2 (ATG2A or ATG2B) from the cytoplasmic to the luminal leaflet of the bilayer, thereby driving autophagosomal membrane expansion. Also required to supply phosphatidylinositol 4-phosphate to the autophagosome initiation site by recruiting the phosphatidylinositol 4-kinase beta (PI4KB) in a process dependent on ARFIP2, but not ARFIP1. In addition to autophagy, also plays a role in necrotic cell death. This chain is Autophagy-related protein 9A, found in Homo sapiens (Human).